A 166-amino-acid chain; its full sequence is Large ribosomal subunit protein uL10 (166 aa).

Belongs to the universal ribosomal protein uL10 family. In terms of assembly, part of the ribosomal stalk of the 50S ribosomal subunit. The N-terminus interacts with L11 and the large rRNA to form the base of the stalk. The C-terminus forms an elongated spine to which L12 dimers bind in a sequential fashion forming a multimeric L10(L12)X complex.

Its function is as follows. Forms part of the ribosomal stalk, playing a central role in the interaction of the ribosome with GTP-bound translation factors. This Shewanella sediminis (strain HAW-EB3) protein is Large ribosomal subunit protein uL10.